A 347-amino-acid polypeptide reads, in one-letter code: DNA-directed RNA polymerase subunit alpha (347 aa).

The alpha N-terminal domain (alpha-NTD) stretch occupies residues 1–243 (MLFREGTRLI…DQISVFINFD (243 aa)). An alpha C-terminal domain (alpha-CTD) region spans residues 255–347 (SGSSDLNDNL…EWKRKQHHEA (93 aa)).

Belongs to the RNA polymerase alpha chain family. Homodimer. The RNAP catalytic core consists of 2 alpha, 1 beta, 1 beta' and 1 omega subunit. When a sigma factor is associated with the core the holoenzyme is formed, which can initiate transcription.

It carries out the reaction RNA(n) + a ribonucleoside 5'-triphosphate = RNA(n+1) + diphosphate. DNA-dependent RNA polymerase catalyzes the transcription of DNA into RNA using the four ribonucleoside triphosphates as substrates. This Lawsonia intracellularis (strain PHE/MN1-00) protein is DNA-directed RNA polymerase subunit alpha.